Consider the following 369-residue polypeptide: Cyclin-dependent kinase 5 activator 2 (369 aa).

The span at 1-11 (MGTVLSLSPAS) shows a compositional bias: polar residues. Disordered regions lie at residues 1 to 55 (MGTV…SRLK), 72 to 176 (ASAK…SPRR), and 330 to 369 (EAAA…NLDR). Residue Gly2 is the site of N-myristoyl glycine attachment. Residues 74–84 (AKKKKGSKKVT) show a composition bias toward basic residues. Phosphothreonine is present on Thr84. A compositionally biased stretch (basic and acidic residues) spans 99 to 112 (RNRENLLRKGRDGP). Over residues 122–144 (AVPVPTVPTTAATCEPPSGGSAA) the composition is skewed to low complexity. The segment covering 145–171 (APPPGSGGGKPPPPPPPAPQAAPPAPG) has biased composition (pro residues). Over residues 331-352 (AAASTGGPPSGSSASTTSSSSA) the composition is skewed to low complexity.

The protein belongs to the cyclin-dependent kinase 5 activator family. In terms of assembly, heterodimer of a catalytic subunit and a regulatory subunit. In terms of processing, myristoylated. The Gly-2-Ala mutant is absent of the cell periphery, suggesting that a proper myristoylation signal is essential for the proper distribution of CDK5R2 (p39).

Its subcellular location is the cell membrane. Its function is as follows. Activator of CDK5/TPKII. This Mus musculus (Mouse) protein is Cyclin-dependent kinase 5 activator 2 (Cdk5r2).